We begin with the raw amino-acid sequence, 486 residues long: MSEQKEDLFKPVGEAAAEVEDESIAEQNKANDGVKLTGAQDAMGHPVQEIESLCMNCGKNGTTRLLLTSIPYFREIIIMSFDCPHCGFKNCEIQPASQIQEKGSRYVLKVECREDFNRQVIKSETATCKFVELDIEIPAKRGQLTTVEGLLSEMIDDLSQDQEMRKSIDEALYKKIDDFIQKVKSYINCEPNTIPITFILDDPAGNSWIEYKPGEPQHKWSHTQYVRTDEQNVQVGIITRDQLEQRRQEQLKQLANRERNPSESVKVGSANPQFLSDATDIENFNNEVQTFRASCPSCTQECETHMKPVNIPHFKEVIIMSTVCDHCGYKSNEVKTGGAIPDKGRRITLYCDDAADLSRDILKSETCSMVIPELHLDIQEGTLGGRFTTLEGLLRQVYEELESRIFTQTSDSMDEATKARWVEFFAKLKEAIAGKVKFTVIMEDPLAGSYIQNVYAPDPDPNMTIEDYERTKEQNEDLGLSDIKVE.

The interval 1–31 (MSEQKEDLFKPVGEAAAEVEDESIAEQNKAN) is disordered. A Phosphoserine modification is found at Ser23. 2 C4-type zinc fingers span residues 54 to 86 (CMNC…CPHC) and 295 to 327 (CPSC…CDHC). Phosphothreonine is present on Thr407.

It belongs to the ZPR1 family. Interacts with elongation factor 1-alpha.

It localises to the cytoplasm. The protein resides in the nucleus. Acts as a protein folding chaperone for elongation factor 1-alpha. The protein is Zinc finger chaperone ZPR1 of Saccharomyces cerevisiae (strain ATCC 204508 / S288c) (Baker's yeast).